We begin with the raw amino-acid sequence, 149 residues long: MLTIDIQQASTADASQLPSDKQFEIWVEAALQQRMNEAELSIRIVDEDESQALNLQYRGKDKSTNVLSFPCELPDGVELPLLGDLVICAQVVAKEALEQGKLLHAHWAHMVVHGTLHLLGYDHIEDGEAEEMEAIEIQVLLELGYPNPY.

The Zn(2+) site is built by His-113, His-117, and His-123.

It belongs to the endoribonuclease YbeY family. Zn(2+) is required as a cofactor.

The protein localises to the cytoplasm. Functionally, single strand-specific metallo-endoribonuclease involved in late-stage 70S ribosome quality control and in maturation of the 3' terminus of the 16S rRNA. This is Endoribonuclease YbeY from Saccharophagus degradans (strain 2-40 / ATCC 43961 / DSM 17024).